A 427-amino-acid polypeptide reads, in one-letter code: 3-isopropylmalate dehydratase large subunit (427 aa).

3 residues coordinate [4Fe-4S] cluster: C308, C368, and C371.

The protein belongs to the aconitase/IPM isomerase family. LeuC type 2 subfamily. Heterodimer of LeuC and LeuD. [4Fe-4S] cluster serves as cofactor.

The catalysed reaction is (2R,3S)-3-isopropylmalate = (2S)-2-isopropylmalate. The protein operates within amino-acid biosynthesis; L-leucine biosynthesis; L-leucine from 3-methyl-2-oxobutanoate: step 2/4. Catalyzes the isomerization between 2-isopropylmalate and 3-isopropylmalate, via the formation of 2-isopropylmaleate. In Geotalea uraniireducens (strain Rf4) (Geobacter uraniireducens), this protein is 3-isopropylmalate dehydratase large subunit.